The following is a 319-amino-acid chain: L-tryptophan isonitrile synthase AmbI1 (319 aa).

The protein belongs to the isocyanide synthase family.

The catalysed reaction is D-ribulose 5-phosphate + L-tryptophan = (2S)-3-(1H-indol-3-yl)-2-isocyanopropanoate + hydroxyacetone + formaldehyde + phosphate + H2O + H(+). Involved in the biosynthesis of ambiguines, a family of hapalindole-type alkaloids. Responsible for the synthesis of the isonitrile group on tryptophan using ribulose 5-phosphate as the source of the carbon atom. The polypeptide is L-tryptophan isonitrile synthase AmbI1 (Fischerella ambigua (strain UTEX 1903)).